The primary structure comprises 118 residues: Probable FK506-binding protein (118 aa).

In terms of domain architecture, PPIase FKBP-type spans 33 to 118 (GGEVEVHYVG…LVFIIDLISA (86 aa)).

The protein belongs to the FKBP-type PPIase family.

The catalysed reaction is [protein]-peptidylproline (omega=180) = [protein]-peptidylproline (omega=0). Functionally, PPIases accelerate the folding of proteins. The protein is Probable FK506-binding protein of Corynebacterium glutamicum (strain ATCC 13032 / DSM 20300 / JCM 1318 / BCRC 11384 / CCUG 27702 / LMG 3730 / NBRC 12168 / NCIMB 10025 / NRRL B-2784 / 534).